A 557-amino-acid chain; its full sequence is Potassium-transporting ATPase potassium-binding subunit (557 aa).

The next 12 membrane-spanning stretches (helical) occupy residues 5–25 (GFLL…PLGS), 63–83 (LSAI…MLLG), 132–152 (GLTV…FALI), 170–190 (LLRI…LFFI), 253–273 (FVQM…FGEV), 283–303 (LLWA…WAEV), 329–349 (VLVS…AVIA), 356–376 (ALGG…FGGV), 379–399 (GLYG…LMIG), 416–436 (LTAL…ALAM), 484–504 (LLAL…MAIA), and 526–546 (LFVG…FIPA).

It belongs to the KdpA family. As to quaternary structure, the system is composed of three essential subunits: KdpA, KdpB and KdpC.

The protein resides in the cell inner membrane. Functionally, part of the high-affinity ATP-driven potassium transport (or Kdp) system, which catalyzes the hydrolysis of ATP coupled with the electrogenic transport of potassium into the cytoplasm. This subunit binds the periplasmic potassium ions and delivers the ions to the membrane domain of KdpB through an intramembrane tunnel. The chain is Potassium-transporting ATPase potassium-binding subunit from Escherichia coli O6:K15:H31 (strain 536 / UPEC).